Consider the following 670-residue polypeptide: DNA ligase (670 aa).

NAD(+) is bound by residues aspartate 32 to aspartate 36, serine 81 to leucine 82, and glutamate 114. Residue lysine 116 is the N6-AMP-lysine intermediate of the active site. NAD(+)-binding residues include arginine 137, glutamate 174, lysine 291, and lysine 315. Zn(2+)-binding residues include cysteine 409, cysteine 412, cysteine 427, and cysteine 433. The region spanning alanine 592–arginine 670 is the BRCT domain.

This sequence belongs to the NAD-dependent DNA ligase family. LigA subfamily. Mg(2+) serves as cofactor. Requires Mn(2+) as cofactor.

It carries out the reaction NAD(+) + (deoxyribonucleotide)n-3'-hydroxyl + 5'-phospho-(deoxyribonucleotide)m = (deoxyribonucleotide)n+m + AMP + beta-nicotinamide D-nucleotide.. Functionally, DNA ligase that catalyzes the formation of phosphodiester linkages between 5'-phosphoryl and 3'-hydroxyl groups in double-stranded DNA using NAD as a coenzyme and as the energy source for the reaction. It is essential for DNA replication and repair of damaged DNA. The protein is DNA ligase of Haemophilus influenzae (strain 86-028NP).